We begin with the raw amino-acid sequence, 228 residues long: Flavin-dependent thymidylate synthase (228 aa).

Residues 1 to 217 (MEYKILDKGF…PWTFEAFLKF (217 aa)) enclose the ThyX domain. Residues T55, 78–80 (RHR), and E86 each bind FAD. Residues 75–78 (QWFR), 86–90 (EASLR), and R156 each bind dUMP. The ThyX motif signature appears at 78–88 (RHRIGSFNEAS). Residues 172 to 174 (NAR) and N178 contribute to the FAD site. Position 183 (R183) interacts with dUMP. R183 serves as the catalytic Involved in ionization of N3 of dUMP, leading to its activation.

It belongs to the thymidylate synthase ThyX family. As to quaternary structure, homotetramer. FAD serves as cofactor.

The catalysed reaction is dUMP + (6R)-5,10-methylene-5,6,7,8-tetrahydrofolate + NADPH + H(+) = dTMP + (6S)-5,6,7,8-tetrahydrofolate + NADP(+). It participates in pyrimidine metabolism; dTTP biosynthesis. Its function is as follows. Catalyzes the reductive methylation of 2'-deoxyuridine-5'-monophosphate (dUMP) to 2'-deoxythymidine-5'-monophosphate (dTMP) while utilizing 5,10-methylenetetrahydrofolate (mTHF) as the methyl donor, and NADPH and FADH(2) as the reductant. This is Flavin-dependent thymidylate synthase from Thermosipho africanus (strain TCF52B).